The chain runs to 650 residues: Probable potassium transport system protein Kup 1 (650 aa).

Transmembrane regions (helical) follow at residues 12 to 32, 54 to 74, 97 to 117, 139 to 159, 170 to 190, 216 to 236, 249 to 269, 295 to 315, 344 to 364, 375 to 395, 400 to 420, and 428 to 448; these read GLLI…LYVM, ISLV…IIAL, WLVL…TLTP, VSSQ…LFSI, AFGP…LINM, AGIF…ALYS, SWPF…VWIL, LAAI…LITG, IYIP…VLYF, GLSI…WLAM, PVWN…FMIS, and GGYV…VWYY.

The protein belongs to the HAK/KUP transporter (TC 2.A.72) family.

It localises to the cell membrane. It carries out the reaction K(+)(in) + H(+)(in) = K(+)(out) + H(+)(out). Functionally, transport of potassium into the cell. Likely operates as a K(+):H(+) symporter. The sequence is that of Probable potassium transport system protein Kup 1 from Lactobacillus acidophilus (strain ATCC 700396 / NCK56 / N2 / NCFM).